Consider the following 159-residue polypeptide: 2-C-methyl-D-erythritol 2,4-cyclodiphosphate synthase (159 aa).

Residues aspartate 10 and histidine 12 each contribute to the a divalent metal cation site. 4-CDP-2-C-methyl-D-erythritol 2-phosphate-binding positions include 10–12 and 37–38; these read DVH and HS. Position 45 (histidine 45) interacts with a divalent metal cation. Residues 59–61, 64–68, 103–109, 135–138, phenylalanine 142, and arginine 145 each bind 4-CDP-2-C-methyl-D-erythritol 2-phosphate; these read DIG, FPDTD, AQAPKML, and TTTE.

The protein belongs to the IspF family. In terms of assembly, homotrimer. A divalent metal cation serves as cofactor.

The enzyme catalyses 4-CDP-2-C-methyl-D-erythritol 2-phosphate = 2-C-methyl-D-erythritol 2,4-cyclic diphosphate + CMP. It functions in the pathway isoprenoid biosynthesis; isopentenyl diphosphate biosynthesis via DXP pathway; isopentenyl diphosphate from 1-deoxy-D-xylulose 5-phosphate: step 4/6. In terms of biological role, involved in the biosynthesis of isopentenyl diphosphate (IPP) and dimethylallyl diphosphate (DMAPP), two major building blocks of isoprenoid compounds. Catalyzes the conversion of 4-diphosphocytidyl-2-C-methyl-D-erythritol 2-phosphate (CDP-ME2P) to 2-C-methyl-D-erythritol 2,4-cyclodiphosphate (ME-CPP) with a corresponding release of cytidine 5-monophosphate (CMP). This is 2-C-methyl-D-erythritol 2,4-cyclodiphosphate synthase from Francisella tularensis subsp. novicida (strain U112).